The primary structure comprises 658 residues: Threonine--tRNA ligase (658 aa).

The 64-residue stretch at 1–64 (MSNTVSLQFP…GASGKVEIIT (64 aa)) folds into the TGS domain. A catalytic region spans residues 246 to 548 (DHRRLGREMD…LIENFAGHMP (303 aa)). Cys-343, His-394, and His-525 together coordinate Zn(2+).

Belongs to the class-II aminoacyl-tRNA synthetase family. Homodimer. Zn(2+) serves as cofactor.

It is found in the cytoplasm. The enzyme catalyses tRNA(Thr) + L-threonine + ATP = L-threonyl-tRNA(Thr) + AMP + diphosphate + H(+). Catalyzes the attachment of threonine to tRNA(Thr) in a two-step reaction: L-threonine is first activated by ATP to form Thr-AMP and then transferred to the acceptor end of tRNA(Thr). Also edits incorrectly charged L-seryl-tRNA(Thr). This chain is Threonine--tRNA ligase, found in Brucella melitensis biotype 1 (strain ATCC 23456 / CCUG 17765 / NCTC 10094 / 16M).